The primary structure comprises 142 residues: Small ribosomal subunit protein uS12 (142 aa).

The interval 1-44 is disordered; that stretch reads MANGKYAARKLKQDRQKHRWSDSDYARRARGLGKKSDPLEGAPQ. A compositionally biased stretch (basic and acidic residues) spans 11–27; it reads LKQDRQKHRWSDSDYAR.

The protein belongs to the universal ribosomal protein uS12 family. Part of the 30S ribosomal subunit.

With S4 and S5 plays an important role in translational accuracy. Located at the interface of the 30S and 50S subunits. The polypeptide is Small ribosomal subunit protein uS12 (Natronomonas pharaonis (strain ATCC 35678 / DSM 2160 / CIP 103997 / JCM 8858 / NBRC 14720 / NCIMB 2260 / Gabara) (Halobacterium pharaonis)).